The chain runs to 762 residues: MAMQEKYPTEGISHVTSPSSDVIQKGSSLGTEWQTPVISEPFRSRFSRCSSVADSGDTAIGTSCSDIAEDFCSSSGSPPFQPIKSHVTIPTAHVMPSTLGTSPAKPNSTPVGPSSSKLPLSGLAESVGMTRNGDLGAMKHSPGLSRDLMYFSGATGENGIEQSWFPAVGHERQEEARKFDIPSMESTLNQSAMMETLYSDPHHRVRFHNPRTSTSKELYRVLPEAKKAPGSGAVFERNGPHSNSSGVLPLGLQPAPGLSKPLPSQVWQPSPDTWHPREQSCELSTCRQQLELIRLQMEQMQLQNGAICHHPAAFGPSLPILEPAQWISILNSNEHLLKEKELLIDKQRKHISQLEQKVRESELQVHSALLGRPAPFGDVCLLRLQELQRENTFLRAQFAQKTEALSREKIDLEKKLSASEVEVQLIRESLKVALQKHSEEVKKQEERVKGRDKHINNLKKKCQKESEQNREKQQRIETLERYLADLPTLEDHQKQSQQLKDSELKSTELQEKVTELESLLEETQAICREKEIQLESLRQREAEFSSAGHSLQDKQSVEETSGEGPEVEMESWQKRYDSLQKIVEKQQQKMDQLRSQVQSLEQEVAQEEGTSQALREEAQRRDSALQQLRTAVKELSVQNQDLIEKNLTLQEHLRQAQPGSPPSPDTAQLALELHQELASCLQDLQAVCSIVTQRAQGHDPNLSLLLGIHSAQHPETQLDLQKPDVIKRKLEEVQQLRRDIEDLRTTMSDRYAQDMGENCVTQ.

2 disordered regions span residues 1 to 26 (MAMQ…IQKG) and 94 to 119 (VMPS…SKLP). 2 stretches are compositionally biased toward polar residues: residues 14–26 (HVTS…IQKG) and 98–111 (TLGT…STPV). Position 17 is a phosphoserine (Ser-17). Ser-126 and Ser-141 each carry phosphoserine. A mediates interaction with NEK2 and is required for its function in the suppression of centrosome disjunction region spans residues 257–433 (GLSKPLPSQV…QLIRESLKVA (177 aa)). 2 coiled-coil regions span residues 334-657 (EHLL…RQAQ) and 723-750 (PDVI…MSDR). Residues 434-476 (LQKHSEEVKKQEERVKGRDKHINNLKKKCQKESEQNREKQQRI) are required for centrosome localization and for its function in the suppression of centrosome disjunction. Basic and acidic residues-rich tracts occupy residues 443–455 (KQEE…DKHI) and 463–474 (QKESEQNREKQQ). 2 disordered regions span residues 443–474 (KQEE…EKQQ) and 541–570 (EAEF…VEME). Ser-623 bears the Phosphoserine mark.

The protein belongs to the CEP85 family. Homodimer. Interacts with STIL (via N-terminus); this interaction is essential for robust PLK4 activation and efficient centriole assembly and for PLK4-dependent cell migration. Interacts with PLK4; required for CEP85 to be able to drive centriole duplication and cell migration.

The protein resides in the cytoplasm. It localises to the cytoskeleton. The protein localises to the microtubule organizing center. It is found in the centrosome. Its subcellular location is the spindle pole. The protein resides in the nucleus. It localises to the nucleolus. The protein localises to the centriole. It is found in the cell cortex. In terms of biological role, acts as a regulator of centriole duplication through a direct interaction with STIL, a key factor involved in the early steps of centriole formation. The CEP85-STIL protein complex acts as a modulator of PLK4-driven cytoskeletal rearrangements and directional cell motility. Acts as a negative regulator of NEK2 to maintain the centrosome integrity in interphase. Suppresses centrosome disjunction by inhibiting NEK2 kinase activity. The polypeptide is Centrosomal protein of 85 kDa (Homo sapiens (Human)).